The following is a 1176-amino-acid chain: Histidine kinase 2 (1176 aa).

The Cytoplasmic portion of the chain corresponds to methionine 1–proline 29. Residues leucine 30–glycine 50 traverse the membrane as a helical segment. Residues arginine 51–arginine 174 lie on the Extracellular side of the membrane. A helical membrane pass occupies residues asparagine 175 to serine 195. Residues lysine 196–lysine 232 lie on the Cytoplasmic side of the membrane. A helical membrane pass occupies residues asparagine 233 to threonine 253. The Extracellular portion of the chain corresponds to asparagine 254–proline 536. The CHASE domain occupies isoleucine 302–histidine 526. Residues tryptophan 537–leucine 557 form a helical membrane-spanning segment. The Cytoplasmic segment spans residues tyrosine 558–cysteine 1176. The Histidine kinase domain maps to threonine 594–lysine 867. Histidine 597 carries the post-translational modification Phosphohistidine; by autocatalysis. 2 Response regulatory domains span residues arginine 891 to leucine 1013 and glutamine 1036 to phenylalanine 1173. 4-aspartylphosphate occurs at positions 942 and 1086.

Self-interacts. Interacts with AHK3, AHP1, AHP2, AHP3, AHP5, ATAF2, AT2S3, BETAA-AD, CYP20-2, DRP1A, HIR1, HIR2, PI4KB1, PI4KG5 and At4g12060. Autophosphorylated predominantly on His residues. Activation probably requires a transfer of a phosphate group between a His in the transmitter domain and an Asp of the receiver domain. Expressed in roots, leaves and flowers, mostly in the vascular tissues. Present in seedlings.

The protein resides in the endoplasmic reticulum membrane. The catalysed reaction is ATP + protein L-histidine = ADP + protein N-phospho-L-histidine.. With respect to regulation, activated by cytokinins to initiate phosphorelay signaling. Its function is as follows. Cytokinins (CK) receptor related to bacterial two-component regulators. Functions as a histidine kinase and transmits the stress signal to a downstream MAPK cascade. This protein undergoes an ATP-dependent autophosphorylation at a conserved histidine residue in the kinase core, and a phosphoryl group is then transferred to a conserved aspartate residue in the receiver domain. In the presence of cytokinin, feeds phosphate to phosphorelay-integrating histidine phosphotransfer protein (HPt) and activates subsequent cascade. Involved in meristems establishment in seedlings. Redundant negative regulator of drought and salt stress responses and abscisic acid (ABA) signaling. Together with AHK3, plays a negative regulatory role in cold stress signaling via inhibition of ABA response, occurring independently of the cold acclimation pathway. Redundant positive regulator of cytokinin signaling that regulates many developmental processes including seed germination, cell division, seed size, chlorophyll retention during leaf senescence, root repression and shoot promotion. Involved in alkamides (e.g. N-isobutyl decanamide) and N-acylethanolamides (NAE) signaling that control meristematic activity and differentiation processes during plant development. Contributes to vascular bundle formation and secondary growth in a cytokinin-dependent manner, probably by promoting the maintenance of mitotic activity and/or identity of procambial cells. Together with AHK4, required for growth and reproduction promotion stimulated by the endophytic fungus Piriformospora indica in a trans-zeatin-dependent manner. Required by the cytokinin-dependent flower development regulation pathway. This Arabidopsis thaliana (Mouse-ear cress) protein is Histidine kinase 2 (AHK2).